A 100-amino-acid chain; its full sequence is NADH-quinone oxidoreductase subunit K (100 aa).

3 helical membrane passes run 3–23 (LNAY…GIFL), 29–49 (ISIM…FVAF), and 60–80 (IFTF…LAIL).

It belongs to the complex I subunit 4L family. In terms of assembly, NDH-1 is composed of 14 different subunits. Subunits NuoA, H, J, K, L, M, N constitute the membrane sector of the complex.

Its subcellular location is the cell inner membrane. It carries out the reaction a quinone + NADH + 5 H(+)(in) = a quinol + NAD(+) + 4 H(+)(out). Functionally, NDH-1 shuttles electrons from NADH, via FMN and iron-sulfur (Fe-S) centers, to quinones in the respiratory chain. The immediate electron acceptor for the enzyme in this species is believed to be ubiquinone. Couples the redox reaction to proton translocation (for every two electrons transferred, four hydrogen ions are translocated across the cytoplasmic membrane), and thus conserves the redox energy in a proton gradient. This is NADH-quinone oxidoreductase subunit K from Magnetococcus marinus (strain ATCC BAA-1437 / JCM 17883 / MC-1).